Reading from the N-terminus, the 3372-residue chain is MPIGCKERPTFFEIFRTRCNKADLGPISLNWFEELCLEAPPYNSEPTEESGYKISYEPNLFKTPQRKPCHQLASTPIIFKEQGLIPPIYQQSPLKELGKDITNSKHRSCCTMKSKMDQTNDVTSPPLNSCLSESPLLRSTHVTPQREKSVVCGSLFHTPKLTKGQTPKRISESLGAEVDPDMSWSSSLATPPTLSSTVLIVRDEEASAAVFPNDTTAIFKSYFCNHDESLKKNDRFIPSGPDSENKSQREAKSQGLGKMVGNSCDKVNSCKDPFGNSTLNVLEDGVRERVADVSEEDSFPLCVPKCKTRNLQKIKTSKTRKNIFNETTDECKEAKKQMKENKHSFVSEMEANASDPLDSNVTNQKPFGNGSDKISKEVVLSSASESCHLTLSGLNGTHMEKLPLLCISSCDQNNSEKDLITTEKECTNFIILEDSLPQISGVPKCTEKILNEEIVVNKIDEGQCLESHEDSILAVKQAVFETSLIASPLQGIRKSIFRIRESPEETFSAVFSNNITDPNFKEEHEASESVLEKHSICSQKEDSLSTSSLDNGSWPATIKHTSVALKNSGLISTLKKKTKKFIYVVNDETSYQGLKTQKDQQSGLMNYSAQFEANVLEGPLTFANADSGLLHSSVKKTCLQNDSKEPILSLTNSFGTLLRKVSNKGSSSPNNKIISQDLDYKEAKIKKEKLQSFISTETNCLSSLQEKHCEDDTKSQRVADRKEEILPAVSQPSVPYSEVEDSGIHFQTLKSFSSDPDKSSQLTPHPRDPPSNPVGLSRGRESYEVSETLKCKNHEAGFELTKTMENSQEIHVLNEHAKKAKLLSTEKYVTEASPSMKVPFNQNAHLTIIQKDQKETTLISKITMNPNSEELFPDGDNFVFKITKERNVPVLGSIKELQDSDLCCVKEPVLENSTMVVYTDMDDKQAAKVSITKGFDSSNIDDLTEKDRNSIKQQLRMTLDQDSKSDITLDSDMKSNGNNDYMDNWARLSDPILNHNFGNGFRTASNKEIKLSEHNIKKSKMLFKDIEERYPTNLACIEIVNTPLESQEKLSKPHILDPQSINTVSGCVQSSAYVSDSENRHTTPPTLSLKRDFDSNHNLTPSQKAEITELSTILEESGSQFEFTQFRKPSHLKQKNPCEMPEKHLTISNTTPEEQKDGHLRLTINALSISQGDSSKKFEGIIGGKQKLACLSKTSCNKSASGHLTGKNEVEFRGFYSARGTKLNVCSEALQKAKKLFSDLENISEETSVEVDRSFSSSKCNGSVSMFKKENCNNEKKLNEKNNKYRLILQNNIEMTTGIFVAEDTEGYKRNIENKANKYTDASRNVYNFREADGSDSSKNDTVYIHKEENGLPYIDQHDIDLKLSSQFIKEGNTQIKEGLSDLTCLEVVKAEETLHVNTSNKEHLTANTMGRITKDFDIFDVSFQTASGKNIRVSRASLNKVTNLLDQKCTEEELNNFADSLNSELLSGIDINKADISHHGEMEILKKRQMKESDLTGTENKSLTLQQRPEYEIKKIKEPTILGFHTASGKRIEIAKESLDKVKNLFDEQEQDKSEMTNFSHRGTKMSKGREECEGGLRLACKTIEITPASKEEEMQKPLEKNLVSNEIVVVPRLLSDNLYKQTENLKIPNRASLKVKVHENTGKETAKKPTTCTNQSTYSATENSALSFYTGHGRKISVSQSSILEVKKWLRGGELDDQPEKTVYNISEYLPKSKVDNSGIEPVVRNVGERENTSVSEIMFTVREADTDPQSVNEDICVQRLVTNFSCKKENTAIKVTVSDSNNFDSTQKLNSDSNDAVPVYTTASSERVLVAHETKVAEGFTENCSMAIKQTTKSKPGKIVAGYRKAPDDSEDTICPNSLDGAECSSPSHKDFAETQSEQTPQLNQSISGFKKRSEIPPHQINLKTSDICKLSTGKRLQSISYTNACGIFSTASGKCVQVSDAALQKARQVFSKVEDSAKQPFSKVSFKHNEDHSDKFTREENTMIHTPQNLLSSAFSGFSTASGKQVPVSESALCKVKGILEEFDVMRTECGPQRSPTSRQDVSKMPPPSCVENKTPKHSVNSKLEKAYNKEFKLSSNSKIENGSSENHSVQVSPYPSQFKQDKQLIQGNKASLVENIHLLEKEQALPKNIKWKLETEAFPNLPLKTDTAIHSTDSKDPENYFETETVEIAKAFMEDGELTDADLLSHARHFLPTCQHSEETLVSNSRRGKRRGVLVSVGEPPIKRNLLNEFDRIIKNQEKSLKASKSTPDGIIKDRSLFMHHISLEPVTCGPFSTTKKRQEIQNPNFTAPGQKFLSKSHFYEHLALEKSSSNVSISGQPFCTVPATRSEKRGHSITPSKPVKVFVPPFKTKSRFLQDEQHISKNTHVEENKQKPNNIDEHSSGDSKNNINNSEIHQLNKNNSSQAATMVFTKCEKEPLDLIASLQNARDIQDMRIREKRKQHIFPQPGSLFLAKTSTVPRISLRVAVEGRVPSACSHKQLYMYGVSKHCVKINSKNAESFQFHTQDYFGKEVQWAKEGIQLADGGWLIPSNDGKAGKEEFYRALCDTPGVDPNLISRIWVYNHYRWIIWKLAAMEFAFPKEFANRCLSPERVLLQLKYRYDMEIDRSKRSAIKKIMERDDTAAKTLVLCISETISSSTDLSETSGSKTSGVGTKNVGIVELTDGWYAIKAQLDPPLLALVKKGRLTVGHKIIIHGAELAGSPDACTPLEAPESLILKISANSTRPACWYAKLGFFPDPRPFPLPLSSLFSDGGNVGCVDVVIQRTYPIQWMEKTPSGLCIFRNEREEEREATKYAEAQQKKLEVLFNKIQAEFEKHDENITKRCVPLRALTRQQVCALQDGAELYEAVKNAPDPASLEAYFSEEQIRALNNHRQMLNDKKQAQIQLEFRKAMESAEQGEQMLPRDVTTVWKMRIISYGKKEKDSVTLSIWRPSSDLYSLLTEGKRYRIYHLATSQSKSKSERAHIQLTATKKTQYQQLPASDELLFQVYQPREPLYFNKLLDPDFQPPCSEVDLIGFVVSVVKKIGFAPLVYLSDECHNLLAIKVWTDLNEDIVKPHTLIAASNLQWRPESKSGIPTLFAGDFSRFSASPKEGHFQETFHKMKNTIENVETFCNDAENKLVHILNANSPKVSTPMKDYASEPHTIQTVLGLGNKLSMSSPNSEMNYQSPLSLCKPKAKSVPTPGSAQMTSKSCYKGERELDDPKTCKKRKALDFLSRLPLPPPVSPICTFVSPAAQKAFQPPRSCGTKYETPIKKRELNSPQMTPLKFNDTSLVESDSIADEELALINTQALLSGLAGEDQLMSLNDSPRTAPTSSKDYVRPKSYPTAPGIRDCENPQASTEGGEPDVQDTDTVKRSSMRLQRRQQQT.

Residues 1 to 40 form an interaction with PALB2 region; that stretch reads MPIGCKERPTFFEIFRTRCNKADLGPISLNWFEELCLEAP. The interval 234 to 260 is disordered; that stretch reads DRFIPSGPDSENKSQREAKSQGLGKMV. A compositionally biased stretch (basic and acidic residues) spans 243–252; sequence SENKSQREAK. Phosphoserine occurs at positions 435 and 483. An interaction with NPM1 region spans residues 630–992; sequence LHSSVKKTCL…DNWARLSDPI (363 aa). Residues 704–783 form a disordered region; the sequence is LQEKHCEDDT…VGLSRGRESY (80 aa). Residues 705 to 725 are compositionally biased toward basic and acidic residues; that stretch reads QEKHCEDDTKSQRVADRKEEI. The segment covering 748 to 763 has biased composition (polar residues); it reads TLKSFSSDPDKSSQLT. 5 BRCA2 repeats span residues 994-1028, 1208-1242, 1417-1451, 1518-1552, and 1663-1697; these read NHNF…DIEE, NEVE…DLEN, FDIF…QKCT, KEPT…EQEQ, and TENS…GGEL. An interaction with RAD51 region spans residues 995-2026; it reads HNFGNGFRTA…LCKVKGILEE (1032 aa). The disordered stretch occupies residues 1867 to 1891; the sequence is CSSPSHKDFAETQSEQTPQLNQSIS. The span at 1877–1891 shows a compositional bias: polar residues; it reads ETQSEQTPQLNQSIS. Serine 1924 is modified (phosphoserine). The stretch at 1925–1959 is one BRCA2 6 repeat; it reads YTNACGIFSTASGKCVQVSDAALQKARQVFSKVED. A Phosphothreonine modification is found at threonine 1990. A BRCA2 7 repeat occupies 1995-2029; it reads LSSAFSGFSTASGKQVPVSESALCKVKGILEEFDV. A disordered region spans residues 2034–2062; the sequence is CGPQRSPTSRQDVSKMPPPSCVENKTPKH. Serine 2039 is subject to Phosphoserine. Residues 2213–2279 are interaction with HSF2BP; sequence GKRRGVLVSV…EPVTCGPFST (67 aa). Residues 2359–2387 show a composition bias toward basic and acidic residues; the sequence is LQDEQHISKNTHVEENKQKPNNIDEHSSG. Positions 2359 to 2395 are disordered; that stretch reads LQDEQHISKNTHVEENKQKPNNIDEHSSGDSKNNINN. The interval 2425 to 2776 is interaction with SEM1; that stretch reads IASLQNARDI…QRTYPIQWME (352 aa). Residues 2626 to 2642 carry the Nuclear export signal; masked by interaction with SEM1 motif; that stretch reads AAKTLVLCISETISSST. The disordered stretch occupies residues 3181–3203; that stretch reads AKSVPTPGSAQMTSKSCYKGERE. Polar residues predominate over residues 3186 to 3196; it reads TPGSAQMTSKS. A Phosphoserine; by CDK1 and CDK2 modification is found at serine 3236. Position 3264 is a phosphoserine (serine 3264). The segment covering 3308–3321 has biased composition (polar residues); it reads SLNDSPRTAPTSSK. The disordered stretch occupies residues 3308-3372; sequence SLNDSPRTAP…MRLQRRQQQT (65 aa). A Phosphothreonine; by CHEK1 and CHEK2 modification is found at threonine 3331. Over residues 3361-3372 the composition is skewed to basic residues; that stretch reads SSMRLQRRQQQT.

In terms of assembly, monomer and dimer. Interacts with RAD51; regulates RAD51 recruitment and function at sites of DNA repair. Interacts with SEM1, WDR16, USP11, DMC1, ROCK2 and NPM1. Interacts with both nonubiquitinated and monoubiquitinated FANCD2; this complex also includes XRCC3 and phosphorylated FANCG. Part of a BRCA complex containing BRCA1, BRCA2 and PALB2. Component of the homologous recombination repair (HR) complex composed of ERCC5/XPG, BRCA2, PALB2, DSS1 and RAD51. Within the complex, interacts with ERCC5/XPG and PALB2. Interacts directly with PALB2 which may serve as a scaffold for a HR complex containing PALB2, BRCA2, RAD51C, RAD51 and XRCC3. Interacts with BRCA1 only in the presence of PALB2 which serves as the bridging protein. Interacts with POLH; the interaction is direct. Interacts with the TREX-2 complex subunits PCID2 and SEM1. Interacts with HSF2BP and BRME1; the interaction with HSF2BP is direct and allows the formation of a ternary complex. The complex BRME1:HSF2BP:BRCA2 interacts with SPATA22, MEIOB and RAD51. In terms of processing, phosphorylated by ATM upon irradiation-induced DNA damage. Phosphorylation by CHEK1 and CHEK2 regulates interaction with RAD51. Phosphorylation at Ser-3236 by CDK1 and CDK2 is low in S phase when recombination is active, but increases as cells progress towards mitosis; this phosphorylation prevents homologous recombination-dependent repair during S phase and G2 by inhibiting RAD51 binding. Post-translationally, ubiquitinated in the absence of DNA damage; this does not lead to proteasomal degradation. In contrast, ubiquitination in response to DNA damage leads to proteasomal degradation.

Its subcellular location is the nucleus. It is found in the cytoplasm. The protein localises to the cytoskeleton. The protein resides in the microtubule organizing center. It localises to the centrosome. Its function is as follows. Involved in double-strand break repair and/or homologous recombination. Binds RAD51 and potentiates recombinational DNA repair by promoting assembly of RAD51 onto single-stranded DNA (ssDNA). Acts by targeting RAD51 to ssDNA over double-stranded DNA, enabling RAD51 to displace replication protein-A (RPA) from ssDNA and stabilizing RAD51-ssDNA filaments by blocking ATP hydrolysis. Part of a PALB2-scaffolded HR complex containing RAD51C and which is thought to play a role in DNA repair by HR. May participate in S phase checkpoint activation. Binds selectively to ssDNA, and to ssDNA in tailed duplexes and replication fork structures. May play a role in the extension step after strand invasion at replication-dependent DNA double-strand breaks; together with PALB2 is involved in both POLH localization at collapsed replication forks and DNA polymerization activity. In concert with NPM1, regulates centrosome duplication. Interacts with the TREX-2 complex (transcription and export complex 2) subunits PCID2 and SEM1, and is required to prevent R-loop-associated DNA damage and thus transcription-associated genomic instability, independently of its known role in homologous recombination. The sequence is that of Breast cancer type 2 susceptibility protein homolog (BRCA2) from Felis catus (Cat).